Consider the following 1388-residue polypeptide: Kinesin-like protein KIF15 (1388 aa).

The disordered stretch occupies residues 1-25 (MAPGCKTELRSVTNGQSNQPSNEGD). The segment covering 10–22 (RSVTNGQSNQPSN) has biased composition (polar residues). Residues 26 to 363 (AIKVFVRIRP…LNFAQRAKLI (338 aa)) enclose the Kinesin motor domain. 109–116 (GQTGSGKT) serves as a coordination point for ATP. Residues 368-1388 (VVNEDTQGNV…FLKEKKRSES (1021 aa)) adopt a coiled-coil conformation. Threonine 399 carries the phosphothreonine modification. At serine 568 the chain carries Phosphoserine. Residue lysine 1009 is modified to N6-acetyllysine. 2 positions are modified to phosphoserine: serine 1141 and serine 1169. The interval 1228-1250 (QKENSDQNHPDNQQLKNEQEESI) is disordered.

The protein belongs to the TRAFAC class myosin-kinesin ATPase superfamily. Kinesin family. KLP2 subfamily. In terms of assembly, interacts with MKI67 and TPX2. In terms of tissue distribution, expressed in testis, colon, thymus and in breast cancer.

The protein localises to the cytoplasm. Its subcellular location is the cytoskeleton. It is found in the spindle. Functionally, plus-end directed kinesin-like motor enzyme involved in mitotic spindle assembly. The polypeptide is Kinesin-like protein KIF15 (KIF15) (Homo sapiens (Human)).